The sequence spans 481 residues: Probable glycine dehydrogenase (decarboxylating) subunit 2 (481 aa).

Lys-265 carries the post-translational modification N6-(pyridoxal phosphate)lysine.

The protein belongs to the GcvP family. C-terminal subunit subfamily. In terms of assembly, the glycine cleavage system is composed of four proteins: P, T, L and H. In this organism, the P 'protein' is a heterodimer of two subunits. Pyridoxal 5'-phosphate is required as a cofactor.

The catalysed reaction is N(6)-[(R)-lipoyl]-L-lysyl-[glycine-cleavage complex H protein] + glycine + H(+) = N(6)-[(R)-S(8)-aminomethyldihydrolipoyl]-L-lysyl-[glycine-cleavage complex H protein] + CO2. The glycine cleavage system catalyzes the degradation of glycine. The P protein binds the alpha-amino group of glycine through its pyridoxal phosphate cofactor; CO(2) is released and the remaining methylamine moiety is then transferred to the lipoamide cofactor of the H protein. The chain is Probable glycine dehydrogenase (decarboxylating) subunit 2 from Thermosipho melanesiensis (strain DSM 12029 / CIP 104789 / BI429).